The primary structure comprises 210 residues: 3-hexulose-6-phosphate synthase (210 aa).

The protein belongs to the HPS/KGPDC family. HPS subfamily.

The enzyme catalyses D-ribulose 5-phosphate + formaldehyde = D-arabino-hex-3-ulose 6-phosphate. It functions in the pathway one-carbon metabolism; formaldehyde assimilation via RuMP pathway; D-fructose 6-phosphate from D-ribulose 5-phosphate and formaldehyde: step 1/2. Catalyzes the condensation of ribulose 5-phosphate with formaldehyde to form 3-hexulose 6-phosphate. The chain is 3-hexulose-6-phosphate synthase from Staphylococcus epidermidis (strain ATCC 35984 / DSM 28319 / BCRC 17069 / CCUG 31568 / BM 3577 / RP62A).